The following is a 794-amino-acid chain: MKLKYGTIIFSGLLGVSAILAACGARGKFDQVDDGKIVLASSLTSKGAANALQTIVKKYNEVKNIDDYPIEIIQIAGGYDGGRGNLQTKLSVKDKNSFYNLILNYPDVVSVLGRVGMELPFDKVRTDKLSPRFLDFNKRISAISKQGIYGIPVSLSTEVLVLNGPVLHYILSSAKGSSGKTQVSQTSSGSNQQKTLQKPLKIDTSDSSTSSLWTQIENAAKNNGKKANNSKSNRRSTDQSTQTHNDQGDASESDKKIKESWGDYEEVDGGLKGFTFKASIFDNWHDLLDFSTRAAKSFKKIKDNNTKKGTDIQGILGVDSSANSLFTSVFAAGNGDYDNFFYKVANGRADFSNFKNRGSSFQNLQSVFNDYKGLIDQNGLFVNKGGSYSSNFQKFHQLAYSISSTSGFYYSFAGNSAKRLKFGDNSFIEYPQYTVPIKAPSKNGDGNSTNSNSDLLGTFTLSSVKKSTDKSKSDSQQNQGKKVEGTPNQGKKAEGAQNQGKKENNSTTIEIYKNKIPDGKNAGKDAILIKDNNLIKQLEDAAKKNGAESNQKQGGESNVQKEQIIGYTTTGNVREDGNHIFRVDKINDEQYDRKIIVGVTVETLEQSSTLQSEEAIVLAAPGKYKSTDKKKVTITQGPNIIGIHANEKENAETQKFVDWFLNTEVDWPAKENSSNKQDQQNSTKKQTAAEFFVESASYILPLKEIFENKEKKENTSNSDKNKSSSQRKNTYAEKALELFQQISKDEIVSYSDPSDFRSGKFRDGIGSNFNAAVSSKADFNKFVKGFIATLGSEI.

The first 22 residues, 1-22, serve as a signal peptide directing secretion; that stretch reads MKLKYGTIIFSGLLGVSAILAA. C23 carries N-palmitoyl cysteine lipidation. Residue C23 is the site of S-diacylglycerol cysteine attachment. The span at 177-196 shows a compositional bias: polar residues; it reads SSGKTQVSQTSSGSNQQKTL. Disordered regions lie at residues 177-208, 220-257, and 466-506; these read SSGKTQVSQTSSGSNQQKTLQKPLKIDTSDSS, AKNNGKKANNSKSNRRSTDQSTQTHNDQGDASESDKKI, and KSTD…ENNS. Residues 220 to 231 are compositionally biased toward low complexity; that stretch reads AKNNGKKANNSK. Polar residues predominate over residues 238–250; that stretch reads DQSTQTHNDQGDA.

Belongs to the MG185/MG260 family.

The protein resides in the cell membrane. This is an uncharacterized protein from Mycoplasma pneumoniae (strain ATCC 29342 / M129 / Subtype 1) (Mycoplasmoides pneumoniae).